A 41-amino-acid chain; its full sequence is Iota-conotoxin-like r11d (41 aa).

4 cysteine pairs are disulfide-bonded: Cys2–Cys16, Cys9–Cys19, Cys15–Cys24, and Cys18–Cys35. Pro8 carries the 4-hydroxyproline modification. Pro26 is modified (4-hydroxyproline).

In terms of processing, position 41 corresponds to a L-threonine, and not a D-threonine as firstly supposed. In terms of tissue distribution, expressed by the venom duct.

The protein resides in the secreted. Its function is as follows. Iota-conotoxins bind to voltage-gated sodium channels (Nav) and act as agonists by shifting the voltage-dependence of activation to more hyperpolarized levels. Both natural (L-Thr form) and synthetic (D-Thr form) peptides cause paralysis and death following intracranial injection and grooming and hypersensitivity upon intraperitoneal injection into mice. The L-Thr form of the peptide is 7-fold more potent than the D-Thr form. Both natural peptide (L-Thr form) and synthetic peptide (D-Thr form) are active on nerve, and on muscle. In Conus radiatus (Rayed cone), this protein is Iota-conotoxin-like r11d.